Reading from the N-terminus, the 290-residue chain is 33 kDa chaperonin (290 aa).

Cystine bridges form between Cys-235–Cys-237 and Cys-268–Cys-271.

Belongs to the HSP33 family. Under oxidizing conditions two disulfide bonds are formed involving the reactive cysteines. Under reducing conditions zinc is bound to the reactive cysteines and the protein is inactive.

It localises to the cytoplasm. Its function is as follows. Redox regulated molecular chaperone. Protects both thermally unfolding and oxidatively damaged proteins from irreversible aggregation. Plays an important role in the bacterial defense system toward oxidative stress. This Streptococcus uberis (strain ATCC BAA-854 / 0140J) protein is 33 kDa chaperonin.